A 486-amino-acid chain; its full sequence is Malonate-semialdehyde dehydrogenase 2 (486 aa).

Phe-154, Lys-178, Glu-181, Arg-182, and Ser-231 together coordinate NAD(+). Residue Cys-286 is the Nucleophile of the active site. An NAD(+)-binding site is contributed by Glu-385.

It belongs to the aldehyde dehydrogenase family. IolA subfamily. As to quaternary structure, homotetramer.

It carries out the reaction 3-oxopropanoate + NAD(+) + CoA + H2O = hydrogencarbonate + acetyl-CoA + NADH + H(+). It catalyses the reaction 2-methyl-3-oxopropanoate + NAD(+) + CoA + H2O = propanoyl-CoA + hydrogencarbonate + NADH + H(+). The protein operates within polyol metabolism; myo-inositol degradation into acetyl-CoA; acetyl-CoA from myo-inositol: step 7/7. Its function is as follows. Catalyzes the oxidation of malonate semialdehyde (MSA) and methylmalonate semialdehyde (MMSA) into acetyl-CoA and propanoyl-CoA, respectively. Is involved in a myo-inositol catabolic pathway. Bicarbonate, and not CO2, is the end-product of the enzymatic reaction. The protein is Malonate-semialdehyde dehydrogenase 2 of Shouchella clausii (strain KSM-K16) (Alkalihalobacillus clausii).